Reading from the N-terminus, the 568-residue chain is Zinc finger protein 768 (568 aa).

Residues 1–16 are compositionally biased toward basic and acidic residues; sequence MEREASSWGLESRDVH. Disordered regions lie at residues 1–223, 228–247, and 264–287; these read MERE…SLGV, SFTQGFGEQPTGALPPFDMP, and LNLTGTLRGPGRRGGRARGGQGPR. 3 positions are modified to phosphoserine: serine 17, serine 23, and serine 27. Position 35 is a phosphothreonine (threonine 35). Residues serine 36, serine 65, serine 72, serine 79, serine 86, serine 93, serine 100, serine 107, serine 114, serine 121, serine 128, serine 135, and serine 149 each carry the phosphoserine modification. Residues 62 to 80 show a composition bias toward low complexity; that stretch reads EPQSPEFEPQSPEFESQSP. Residues 110–122 are compositionally biased toward polar residues; that stretch reads SDPQSPEFESQSP. Tyrosine 152 carries the post-translational modification Phosphotyrosine. Phosphoserine is present on serine 154. Positions 159–186 are enriched in polar residues; it reads FESQSPGYESQSPGYEPQNSGDGVQNSE. The residue at position 189 (threonine 189) is a Phosphothreonine. At serine 191 the chain carries Phosphoserine. The C2H2-type 1 zinc-finger motif lies at 289–311; sequence NICGICGKSFGRGSTLIQHQRIH. Threonine 312 carries the phosphothreonine modification. The residue at position 317 (tyrosine 317) is a Phosphotyrosine. 4 C2H2-type zinc fingers span residues 317-339, 345-367, 373-395, and 401-423; these read YKCEVCSKAFSQSSDLIKHQRTH, YKCPRCGKAFADSSYLLRHQRTH, YKCPHCGKAFGDSSYLLRHQRTH, and YSCPECGKCYSQNSSLRSHQRVH. 2 positions are modified to phosphoserine: serine 323 and serine 327. Phosphothreonine is present on threonine 424. 5 consecutive C2H2-type zinc fingers follow at residues 429 to 451, 457 to 479, 485 to 507, 513 to 535, and 541 to 563; these read FSCGICGKSFSQRSALIPHARSH, FKCPECGKRFGQSSVLAIHARTH, YSCPDCGKTFNRSSTLIQHQRSH, YRCAVCGKGFCRSSTLLQHHRVH, and YKCDDCGKAFSQSSDLIRHQRTH. At serine 470 the chain carries Phosphoserine.

It belongs to the krueppel C2H2-type zinc-finger protein family. Interacts (via zinc-finger domains) with TP53 (via N-terminus); interaction might be facilitated by TP53 oligomerization state. Interacts with ELP3. In terms of processing, may be phosphorylated at residue 'Ser-5' of the tandem heptapeptide repeats in the N-terminus. Phosphorylation might be increased upon RAS pathway activation and negatively regulate protein stability.

It is found in the nucleus. The protein resides in the chromosome. Binds to mammalian-wide interspersed repeat (MIRs) sequences in euchromatin and promoter regions of genes at the consensus sequence 5'-GCTGTGTG-[N20]-CCTCTCTG-3', consisting of two anchor regions connected by a linker region; the linker region probably does not contribute to the binding specificity. Required for cell homeostasis. May be involved in transcriptional regulation. The chain is Zinc finger protein 768 (Znf768) from Mus musculus (Mouse).